Here is a 153-residue protein sequence, read N- to C-terminus: Endoribonuclease YbeY (153 aa).

Zn(2+)-binding residues include His-118, His-122, and His-128.

It belongs to the endoribonuclease YbeY family. Zn(2+) is required as a cofactor.

The protein localises to the cytoplasm. In terms of biological role, single strand-specific metallo-endoribonuclease involved in late-stage 70S ribosome quality control and in maturation of the 3' terminus of the 16S rRNA. The sequence is that of Endoribonuclease YbeY from Staphylococcus carnosus (strain TM300).